The primary structure comprises 366 residues: Protein-glutamate methylesterase/protein-glutamine glutaminase of group 2 operon (366 aa).

Residues 19–136 (RVLIVDDSAM…GQGLPAIMRD (118 aa)) enclose the Response regulatory domain. Position 70 is a 4-aspartylphosphate (Asp70). Residues 162–356 (PGASEDWIHA…ARMMLAAAAD (195 aa)) form the CheB-type methylesterase domain. Active-site residues include Ser175, His201, and Asp298.

This sequence belongs to the CheB family. In terms of processing, phosphorylated by CheA. Phosphorylation of the N-terminal regulatory domain activates the methylesterase activity.

It localises to the cytoplasm. The enzyme catalyses [protein]-L-glutamate 5-O-methyl ester + H2O = L-glutamyl-[protein] + methanol + H(+). It carries out the reaction L-glutaminyl-[protein] + H2O = L-glutamyl-[protein] + NH4(+). Functionally, involved in chemotaxis. Part of a chemotaxis signal transduction system that modulates chemotaxis in response to various stimuli. Catalyzes the demethylation of specific methylglutamate residues introduced into the chemoreceptors (methyl-accepting chemotaxis proteins or MCP) by CheR. Also mediates the irreversible deamidation of specific glutamine residues to glutamic acid. This chain is Protein-glutamate methylesterase/protein-glutamine glutaminase of group 2 operon, found in Cereibacter sphaeroides (Rhodobacter sphaeroides).